We begin with the raw amino-acid sequence, 134 residues long: Glycine cleavage system H protein (134 aa).

The Lipoyl-binding domain maps to 24–106; it reads TVRVGITDYA…YGAGWLLDIQ (83 aa). Lys65 carries the post-translational modification N6-lipoyllysine.

It belongs to the GcvH family. As to quaternary structure, the glycine cleavage system is composed of four proteins: P, T, L and H. The cofactor is (R)-lipoate.

Functionally, the glycine cleavage system catalyzes the degradation of glycine. The H protein shuttles the methylamine group of glycine from the P protein to the T protein. This is Glycine cleavage system H protein from Mycobacterium tuberculosis (strain ATCC 25177 / H37Ra).